A 316-amino-acid polypeptide reads, in one-letter code: Glycine--tRNA ligase alpha subunit (316 aa).

This sequence belongs to the class-II aminoacyl-tRNA synthetase family. As to quaternary structure, tetramer of two alpha and two beta subunits.

It is found in the cytoplasm. The catalysed reaction is tRNA(Gly) + glycine + ATP = glycyl-tRNA(Gly) + AMP + diphosphate. This Cupriavidus taiwanensis (strain DSM 17343 / BCRC 17206 / CCUG 44338 / CIP 107171 / LMG 19424 / R1) (Ralstonia taiwanensis (strain LMG 19424)) protein is Glycine--tRNA ligase alpha subunit.